The sequence spans 167 residues: Large ribosomal subunit protein uL10 (167 aa).

This sequence belongs to the universal ribosomal protein uL10 family. As to quaternary structure, part of the ribosomal stalk of the 50S ribosomal subunit. The N-terminus interacts with L11 and the large rRNA to form the base of the stalk. The C-terminus forms an elongated spine to which L12 dimers bind in a sequential fashion forming a multimeric L10(L12)X complex.

Its function is as follows. Forms part of the ribosomal stalk, playing a central role in the interaction of the ribosome with GTP-bound translation factors. The chain is Large ribosomal subunit protein uL10 from Paraburkholderia phytofirmans (strain DSM 17436 / LMG 22146 / PsJN) (Burkholderia phytofirmans).